Here is a 505-residue protein sequence, read N- to C-terminus: Dolichyl pyrophosphate Glc1Man9GlcNAc2 alpha-1,3-glucosyltransferase (505 aa).

Residues 1–3 (MAE) are Lumenal-facing. Residues 4-24 (IYPSLVQCAIVATAFKVLLFP) form a helical membrane-spanning segment. Residues 25 to 101 (AYKSTDFEVH…DSWQTVYFQR (77 aa)) lie on the Cytoplasmic side of the membrane. Residues 102–122 (WTVIVTELVLLYALQMFVDST) form a helical membrane-spanning segment. Topologically, residues 123–128 (PGVSKR) are lumenal. The chain crosses the membrane as a helical span at residues 129–149 (AAHAAAVSILLSPGLLIIDHI). Residues 150-152 (HFQ) lie on the Cytoplasmic side of the membrane. Residues 153–169 (YNGVMYGILIASLVLAK) form a helical membrane-spanning segment. Topologically, residues 170–173 (KKSS) are lumenal. Residues 174-194 (LLASGLVFAALLCMKHIYLYL) form a helical membrane-spanning segment. The Cytoplasmic segment spans residues 195 to 224 (APAYFVYLLRVYCLPPKLSPRSIFRIQFFN). Residues 225 to 245 (CVKLGGGIAAIFAAAFGPFAL) form a helical membrane-spanning segment. The Lumenal segment spans residues 246–319 (KNQIPQIFSR…TSFAVLPDIT (74 aa)). The chain crosses the membrane as a helical span at residues 320–340 (PRMCFVLTLLFQAIPLIKLFM). At 341 to 359 (RPTWEGFIGGVTLCGYASF) the chain is on the cytoplasmic side. The helical transmembrane segment at 360–380 (LFGWHVHEKAILLVIIPFSLI) threads the bilayer. Residues 381 to 386 (ALKDRR) lie on the Lumenal side of the membrane. Residues 387–407 (YLGAFRPLAVAGHVSLFPLIF) traverse the membrane as a helical segment. The Cytoplasmic portion of the chain corresponds to 408-409 (TP). Residues 410–430 (AEFPIKTVYTIFWLVLFLMAF) form a helical membrane-spanning segment. Topologically, residues 431–450 (DRLAPAPTRQRLFLFDRFST) are lumenal. Residues 451–471 (AYITVSIPLIFYCSLMHGIIF) form a helical membrane-spanning segment. Residues 472 to 480 (GKSYEFLPL) are Cytoplasmic-facing. The chain crosses the membrane as a helical span at residues 481-501 (MFTSSYSAIGVVGSWLGFMVV). The Lumenal portion of the chain corresponds to 502–505 (YFTE).

Belongs to the ALG6/ALG8 glucosyltransferase family.

The protein resides in the endoplasmic reticulum membrane. The enzyme catalyses an alpha-D-Glc-(1-&gt;3)-alpha-D-Man-(1-&gt;2)-alpha-D-Man-(1-&gt;2)-alpha-D-Man-(1-&gt;3)-[alpha-D-Man-(1-&gt;2)-alpha-D-Man-(1-&gt;3)-[alpha-D-Man-(1-&gt;2)-alpha-D-Man-(1-&gt;6)]-alpha-D-Man-(1-&gt;6)]-beta-D-Man-(1-&gt;4)-beta-D-GlcNAc-(1-&gt;4)-alpha-D-GlcNAc-diphospho-di-trans,poly-cis-dolichol + a di-trans,poly-cis-dolichyl beta-D-glucosyl phosphate = an alpha-D-Glc-(1-&gt;3)-alpha-D-Glc-(1-&gt;3)-alpha-D-Man-(1-&gt;2)-alpha-D-Man-(1-&gt;2)-alpha-D-Man-(1-&gt;3)-[alpha-D-Man-(1-&gt;2)-alpha-D-Man-(1-&gt;3)-[alpha-D-Man-(1-&gt;2)-alpha-D-Man-(1-&gt;6)]-alpha-D-Man-(1-&gt;6)]-beta-D-Man-(1-&gt;4)-beta-D-GlcNAc-(1-&gt;4)-alpha-D-GlcNAc-diphospho-di-trans,poly-cis-dolichol + a di-trans,poly-cis-dolichyl phosphate + H(+). It participates in protein modification; protein glycosylation. Its function is as follows. Dolichyl pyrophosphate Glc1Man9GlcNAc2 alpha-1,3-glucosyltransferase that operates in the biosynthetic pathway of dolichol-linked oligosaccharides, the glycan precursors employed in protein asparagine (N)-glycosylation. The assembly of dolichol-linked oligosaccharides begins on the cytosolic side of the endoplasmic reticulum membrane and finishes in its lumen. The sequential addition of sugars to dolichol pyrophosphate produces dolichol-linked oligosaccharides containing fourteen sugars, including two GlcNAcs, nine mannoses and three glucoses. Once assembled, the oligosaccharide is transferred from the lipid to nascent proteins by oligosaccharyltransferases. In the lumen of the endoplasmic reticulum, adds the second glucose residue from dolichyl phosphate glucose (Dol-P-Glc) onto the lipid-linked oligosaccharide intermediate Glc(1)Man(9)GlcNAc(2)-PP-Dol to produce Glc(2)Man(9)GlcNAc(2)-PP-Dol. The polypeptide is Dolichyl pyrophosphate Glc1Man9GlcNAc2 alpha-1,3-glucosyltransferase (alg-8) (Neurospora crassa (strain ATCC 24698 / 74-OR23-1A / CBS 708.71 / DSM 1257 / FGSC 987)).